The chain runs to 304 residues: N-acetyl-D-glucosamine kinase (304 aa).

ATP-binding positions include glycine 4–lysine 11 and glycine 133–isoleucine 140. Zn(2+) is bound by residues histidine 157, cysteine 177, cysteine 179, and cysteine 184.

This sequence belongs to the ROK (NagC/XylR) family. NagK subfamily.

The catalysed reaction is N-acetyl-D-glucosamine + ATP = N-acetyl-D-glucosamine 6-phosphate + ADP + H(+). Its pathway is cell wall biogenesis; peptidoglycan recycling. Functionally, catalyzes the phosphorylation of N-acetyl-D-glucosamine (GlcNAc) derived from cell-wall degradation, yielding GlcNAc-6-P. This Pectobacterium carotovorum subsp. carotovorum (strain PC1) protein is N-acetyl-D-glucosamine kinase.